Reading from the N-terminus, the 800-residue chain is Nuclear poly(A) polymerase 2 (800 aa).

Residues 103–105 (FGS), 115–118 (ADID), Asp171, Lys232, Tyr241, and 250–251 (GV) each bind ATP. Mg(2+)-binding residues include Asp116, Asp118, and Asp171. 2 short sequence motifs (nuclear localization signal) span residues 487-494 (RRRQLPSF) and 533-540 (KRKNDDEI). Residues 497 to 576 (PNGYKRSRQS…SGITTSGTPQ (80 aa)) form a disordered region. Positions 527–538 (SVERYAKRKNDD) are enriched in basic and acidic residues. Residues 564-575 (PDSSGITTSGTP) are compositionally biased toward polar residues.

It belongs to the poly(A) polymerase family. As to quaternary structure, monomer. Forms a complex with cleavage and polyadenylation specificity factor (CPSF) subunits CPSF100, CPSF30, FIPS5 and PABN2. Mg(2+) is required as a cofactor. The cofactor is Mn(2+). In terms of tissue distribution, mostly expressed in flowers (highly in the style, receptacle and pedicel, but weakly in the vasculature of sepals) and hypocotyls, and, to a lower extent, in roots and stems. Barely detected in leaves (petioles and vascular system).

It localises to the nucleus. It is found in the cytoplasm. The catalysed reaction is RNA(n) + ATP = RNA(n)-3'-adenine ribonucleotide + diphosphate. Essential protein. Polymerase that creates the 3'-poly(A) tail of mRNA's. Also required for the endoribonucleolytic cleavage reaction at some polyadenylation sites. May acquire specificity through interaction with a cleavage and polyadenylation specificity factor (CPSF) at its C-terminus. Mediates the polyadenylation of RNAs that are associated with polynucleotide phosphorylase (e.g. PNP1). The polypeptide is Nuclear poly(A) polymerase 2 (Arabidopsis thaliana (Mouse-ear cress)).